Consider the following 207-residue polypeptide: MSETYVLKADLRTRVGKGSSRELRRNGQIPAVIYGDKQEPLAIAVSYKEIFYKIHGGGFKTTVATIEVDGKKIQVLPKDYQLDPVRDFPQHVDFLRVSAKSVVHVNVPVHFKNEEAAPGIKRGGVLNVVRHDVELIVPANAIPEALEIDLSGLEIGDSVHISAVKLPKGATPAIQDRDFTIATIAAPAGLKSEENAEGTAEEAKDGE.

It belongs to the bacterial ribosomal protein bL25 family. CTC subfamily. As to quaternary structure, part of the 50S ribosomal subunit; part of the 5S rRNA/L5/L18/L25 subcomplex. Contacts the 5S rRNA. Binds to the 5S rRNA independently of L5 and L18.

In terms of biological role, this is one of the proteins that binds to the 5S RNA in the ribosome where it forms part of the central protuberance. The polypeptide is Large ribosomal subunit protein bL25 (Brucella canis (strain ATCC 23365 / NCTC 10854 / RM-666)).